A 496-amino-acid chain; its full sequence is Protein TOO MANY MOUTHS (496 aa).

Residues 1 to 23 (MARYEFFRQIFIVLSIVSPLVRS) form the signal peptide. At 24–473 (FTVITSDSTA…ATDVSSTSKS (450 aa)) the chain is on the extracellular side. LRR repeat units follow at residues 158 to 182 (GSSL…LGNL), 183 to 208 (TNLK…RFSG), 210 to 228 (RSLD…GFVL), 229 to 252 (PALS…LTSC), 254 to 276 (SLIK…INRL), 277 to 300 (NQLV…LQGL), 302 to 325 (SLQA…AFKG), 326 to 350 (LKNL…LTRL), 351 to 373 (NSLR…EFRD), and 375 to 401 (KHLS…VWRM). 2 N-linked (GlcNAc...) asparagine glycosylation sites follow: asparagine 181 and asparagine 196. Residue asparagine 362 is glycosylated (N-linked (GlcNAc...) asparagine). Residues 438–464 (AETSRPAPSGTVQHLSREEDGALPDGA) form a disordered region. The helical transmembrane segment at 474–494 (LGFSYLSAFFLVFPNFIFMLI) threads the bilayer. Topologically, residues 495 to 496 (SS) are cytoplasmic.

This sequence belongs to the RLP family. As to quaternary structure, forms heterodimer with ERECTA or ERL1 through their extracellular domains. Not able to form homodimer. Interacts with EPF2 but not with EPF1. Interacts with SERK1, SERK2, SERK3/BAK1 and SERK4. Interacts with EPFL9/STOMAGEN. As to expression, in epidermal cells of developing shoots and leaves, but not in roots. Expressed in the stomatal cell lineage in the developing epidermis. Accumulates strongly in meristemoid mother cells (MMC) and meristemoids, somewhat less in meristemoid sister cells (stomatal-lineage ground cells, SLGC), and is barely detected in pavement cells.

It is found in the cell membrane. Promotes cell fate progression in stomatal development. In leaves, needed to correctly orient spacing divisions, to limit the number of asymmetric divisions in neighbor cells, and to promote the asymmetric (amplifying) divisions of meristemoids. In stems, promotes the conversion of meristemoids into guard mother cells (GMC). Positively regulates CAPRICE (CPC) expression in differentiating stomaless-forming cell files. Forms constitutive complexes with ERECTA and ERL1 involved in the recognition of the stomatal regulatory peptides EPF1, EPF2 and EPFL9/STOMAGEN. Modulates the activity of the ligand-receptor pairs EPF2-ERECTA and EPF1-ERL1 in stomatal development. Functions in a combinatorial specific manner with the ERECTA-family (ERf) receptor kinases in the regulation of the immune response. The protein is Protein TOO MANY MOUTHS of Arabidopsis thaliana (Mouse-ear cress).